A 325-amino-acid polypeptide reads, in one-letter code: Biotin synthase (325 aa).

Residues 36–254 (NEVQLAMLLS…IALARIMFPK (219 aa)) form the Radical SAM core domain. [4Fe-4S] cluster is bound by residues Cys51, Cys55, and Cys58. 4 residues coordinate [2Fe-2S] cluster: Cys95, Cys126, Cys186, and Arg258.

It belongs to the radical SAM superfamily. Biotin synthase family. As to quaternary structure, homodimer. Requires [4Fe-4S] cluster as cofactor. [2Fe-2S] cluster is required as a cofactor.

It carries out the reaction (4R,5S)-dethiobiotin + (sulfur carrier)-SH + 2 reduced [2Fe-2S]-[ferredoxin] + 2 S-adenosyl-L-methionine = (sulfur carrier)-H + biotin + 2 5'-deoxyadenosine + 2 L-methionine + 2 oxidized [2Fe-2S]-[ferredoxin]. Its pathway is cofactor biosynthesis; biotin biosynthesis; biotin from 7,8-diaminononanoate: step 2/2. Functionally, catalyzes the conversion of dethiobiotin (DTB) to biotin by the insertion of a sulfur atom into dethiobiotin via a radical-based mechanism. This chain is Biotin synthase, found in Neorickettsia sennetsu (strain ATCC VR-367 / Miyayama) (Ehrlichia sennetsu).